The following is a 642-amino-acid chain: Threonine--tRNA ligase (642 aa).

One can recognise a TGS domain in the interval 1–63; that stretch reads MSEIVVTLPD…TDDCELVIVT (63 aa). The catalytic stretch occupies residues 242–533; it reads DHRKLGQELD…LIEHFDGNFP (292 aa). Residues Cys-334, His-385, and His-510 each contribute to the Zn(2+) site.

This sequence belongs to the class-II aminoacyl-tRNA synthetase family. Homodimer. Zn(2+) serves as cofactor.

Its subcellular location is the cytoplasm. The enzyme catalyses tRNA(Thr) + L-threonine + ATP = L-threonyl-tRNA(Thr) + AMP + diphosphate + H(+). Functionally, catalyzes the attachment of threonine to tRNA(Thr) in a two-step reaction: L-threonine is first activated by ATP to form Thr-AMP and then transferred to the acceptor end of tRNA(Thr). This chain is Threonine--tRNA ligase, found in Natronomonas pharaonis (strain ATCC 35678 / DSM 2160 / CIP 103997 / JCM 8858 / NBRC 14720 / NCIMB 2260 / Gabara) (Halobacterium pharaonis).